The chain runs to 855 residues: MVVMARVPRPERPDLVFEEEDLPYEEEIMRNQFSVKCWLRYIEFKQGAPKPRLNQLYERALKLLPCSYKLWYRYLKARRAQVKHRCVTDPAYEDVNNCHERAFVFMHKMPRLWLDYCQFLMDQGRVTHTRRTFDRALRALPITQHSRIWPLYLRFLRSHPLPETAVRGYRRFLKLSPESAEEYIEYLKSSDRLDEAAQRLATVVNDERFVSKAGKSNYQLWHELCDLISQNPDKVQSLNVDAIIRGGLTRFTDQLGKLWCSLADYYIRSGHFEKARDVYEEAIRTVMTVRDFTQVFDSYAQFEESMIAAKMETASELGREEEDDVDLELRLARFEQLISRRPLLLNSVLLRQNPHHVHEWHKRVALHQGRPREIINTYTEAVQTVDPFKATGKPHTLWVAFAKFYEDNGQLDDARVILEKATKVNFKQVDDLASVWCQCGELELRHENYDEALKLLRKATALPARRAEYFDGSEPVQNRVYKSLKVWSMLADLEESLGTFQSTKAVYDRILDLRIATPQIVINYAMFLEEHKYFEESFKAYERGISLFKWPNVSDIWSTYLTKFISRYGGRKLERARDLFEQALDGCPPKYAKTLYLLYAQLEEEWGLARHAMAVYDRATRAVEPAQQYDMFNIYIKRAAEIYGVTHTRGIYQKAIEVLSDEHAREMCLRFADMECKLGEIDRARAIYSFCSQICDPRTTGAFWQTWKDFEVRHGNEDTIREMLRIRRSVQATYNTQVNFMASQMLKVSGSATGTVSDLAPGQSGMDDMKLLEQRAEQLAAEAERDQPPRAQSKIFFVRSDASREELAELAQQANPEEIQLGEDEDEDEMDLEPNEVRLEQQSVPAAVFGSLKED.

HAT repeat units follow at residues 15-47 (LVFE…FKQG), 48-80 (APKP…ARRA), 90-122 (PAYE…FLMD), 124-158 (GRVT…FLRS), 160-192 (PLPE…SSDR), 198-230 (QRLA…LISQ), 235-268 (VQSL…YYIR), 270-305 (GHFE…FEES), and 369-407 (GRPR…FYED). Lys-420 is subject to N6-acetyllysine. 5 HAT repeats span residues 498–530 (GTFQ…FLEE), 532–566 (KYFE…KFIS), 571–605 (RKLE…LEEE), 643–677 (YGVT…MECK), and 679–713 (GEID…FEVR). Positions 808–855 (AELAQQANPEEIQLGEDEDEDEMDLEPNEVRLEQQSVPAAVFGSLKED) are disordered. Positions 820–834 (QLGEDEDEDEMDLEP) are enriched in acidic residues. Ser-851 is modified (phosphoserine).

This sequence belongs to the crooked-neck family. In terms of assembly, associates with RNA polymerase II, the TCR-specific proteins CKN1/CSA and ERCC6/CSB, and XPA. Identified in the spliceosome C complex. Component of the XAB2 complex, a multimeric protein complex composed of XAB2, PRPF19, AQR, ZNF830, ISY1, and PPIE. Identified in a pentameric intron-binding (IB) complex composed of AQR, XAB2, ISY1, ZNF830 and PPIE that is incorporated into the spliceosome as a preassembled complex. The IB complex does not contain PRPF19.

The protein resides in the nucleus. Functionally, involved in pre-mRNA splicing as component of the spliceosome. Involved in transcription-coupled repair (TCR), transcription and pre-mRNA splicing. This Rattus norvegicus (Rat) protein is Pre-mRNA-splicing factor SYF1 (Xab2).